Here is a 364-residue protein sequence, read N- to C-terminus: DNA polymerase IV (364 aa).

The 185-residue stretch at 14-198 (IIHIDMDAFF…LPIEKFHGVG (185 aa)) folds into the UmuC domain. Mg(2+) is bound by residues D18 and D116. E117 is an active-site residue.

It belongs to the DNA polymerase type-Y family. As to quaternary structure, monomer. The cofactor is Mg(2+).

It is found in the cytoplasm. It carries out the reaction DNA(n) + a 2'-deoxyribonucleoside 5'-triphosphate = DNA(n+1) + diphosphate. Its function is as follows. Poorly processive, error-prone DNA polymerase involved in untargeted mutagenesis. Copies undamaged DNA at stalled replication forks, which arise in vivo from mismatched or misaligned primer ends. These misaligned primers can be extended by PolIV. Exhibits no 3'-5' exonuclease (proofreading) activity. May be involved in translesional synthesis, in conjunction with the beta clamp from PolIII. In Streptococcus pyogenes serotype M28 (strain MGAS6180), this protein is DNA polymerase IV.